A 198-amino-acid chain; its full sequence is 7-methyl-GTP pyrophosphatase (198 aa).

Asp-72 serves as the catalytic Proton acceptor.

Belongs to the Maf family. YceF subfamily. A divalent metal cation is required as a cofactor.

It localises to the cytoplasm. The enzyme catalyses N(7)-methyl-GTP + H2O = N(7)-methyl-GMP + diphosphate + H(+). Functionally, nucleoside triphosphate pyrophosphatase that hydrolyzes 7-methyl-GTP (m(7)GTP). May have a dual role in cell division arrest and in preventing the incorporation of modified nucleotides into cellular nucleic acids. This chain is 7-methyl-GTP pyrophosphatase, found in Idiomarina loihiensis (strain ATCC BAA-735 / DSM 15497 / L2-TR).